The primary structure comprises 153 residues: 3-hydroxyacyl-[acyl-carrier-protein] dehydratase FabZ (153 aa).

The active site involves histidine 54.

Belongs to the thioester dehydratase family. FabZ subfamily.

It is found in the cytoplasm. It catalyses the reaction a (3R)-hydroxyacyl-[ACP] = a (2E)-enoyl-[ACP] + H2O. Its function is as follows. Involved in unsaturated fatty acids biosynthesis. Catalyzes the dehydration of short chain beta-hydroxyacyl-ACPs and long chain saturated and unsaturated beta-hydroxyacyl-ACPs. This is 3-hydroxyacyl-[acyl-carrier-protein] dehydratase FabZ from Chlamydia trachomatis serovar L2 (strain ATCC VR-902B / DSM 19102 / 434/Bu).